Here is a 266-residue protein sequence, read N- to C-terminus: Putative [LysW]-aminoadipate/[LysW]-glutamate kinase (266 aa).

Residues 36–37 (GG), Arg63, and Asn168 each bind substrate.

The protein belongs to the acetylglutamate kinase family. LysZ subfamily.

It localises to the cytoplasm. It catalyses the reaction [amino-group carrier protein]-C-terminal-N-(1,4-dicarboxybutan-1-yl)-L-glutamine + ATP = [amino-group carrier protein]-C-terminal-N-(1-carboxy-5-phosphooxy-5-oxopentan-1-yl)-L-glutamine + ADP. It carries out the reaction [amino-group carrier protein]-C-terminal-gamma-(L-glutamyl)-L-glutamate + ATP = [amino-group carrier protein]-C-terminal-gamma-(5-phospho-L-glutamyl)-L-glutamate + ADP. It participates in amino-acid biosynthesis; L-lysine biosynthesis via AAA pathway; L-lysine from L-alpha-aminoadipate (Thermus route): step 2/5. The protein operates within amino-acid biosynthesis; L-arginine biosynthesis. Its function is as follows. Involved in both the arginine and lysine biosynthetic pathways. Phosphorylates the LysW-bound precursors glutamate (for arginine biosynthesis), respectively alpha-aminoadipate (for lysine biosynthesis). The sequence is that of Putative [LysW]-aminoadipate/[LysW]-glutamate kinase from Cenarchaeum symbiosum (strain A).